Reading from the N-terminus, the 213-residue chain is Orotate phosphoribosyltransferase (213 aa).

5-phospho-alpha-D-ribose 1-diphosphate is bound at residue Lys-26. Orotate is bound at residue Phe-34–Phe-35. Residues Tyr-72–Lys-73, Arg-99, Lys-100, Lys-103, His-105, and Asp-124–Ala-132 contribute to the 5-phospho-alpha-D-ribose 1-diphosphate site. Orotate contacts are provided by Thr-128 and Arg-156.

Belongs to the purine/pyrimidine phosphoribosyltransferase family. PyrE subfamily. Homodimer. Mg(2+) is required as a cofactor.

It carries out the reaction orotidine 5'-phosphate + diphosphate = orotate + 5-phospho-alpha-D-ribose 1-diphosphate. It participates in pyrimidine metabolism; UMP biosynthesis via de novo pathway; UMP from orotate: step 1/2. In terms of biological role, catalyzes the transfer of a ribosyl phosphate group from 5-phosphoribose 1-diphosphate to orotate, leading to the formation of orotidine monophosphate (OMP). This chain is Orotate phosphoribosyltransferase, found in Pseudomonas putida (strain W619).